A 255-amino-acid polypeptide reads, in one-letter code: Aspartate/glutamate leucyltransferase (255 aa).

This sequence belongs to the R-transferase family. Bpt subfamily.

It localises to the cytoplasm. It carries out the reaction N-terminal L-glutamyl-[protein] + L-leucyl-tRNA(Leu) = N-terminal L-leucyl-L-glutamyl-[protein] + tRNA(Leu) + H(+). The enzyme catalyses N-terminal L-aspartyl-[protein] + L-leucyl-tRNA(Leu) = N-terminal L-leucyl-L-aspartyl-[protein] + tRNA(Leu) + H(+). Functions in the N-end rule pathway of protein degradation where it conjugates Leu from its aminoacyl-tRNA to the N-termini of proteins containing an N-terminal aspartate or glutamate. The sequence is that of Aspartate/glutamate leucyltransferase from Leptospira borgpetersenii serovar Hardjo-bovis (strain JB197).